Consider the following 715-residue polypeptide: Probable phospholipase YOR022C, mitochondrial (715 aa).

A mitochondrion-targeting transit peptide spans 1–22; the sequence is MLRFTHRGLPSSTRFRNIFVRL. Disordered stretches follow at residues 161–180, 242–268, and 311–340; these read YPVDKENEGEQKNGSSNKDE, TSTSFKAAKTPQTEVADGSNSSKSRSI, and YNNADNSQGANASSKIEDGKNSGASDRQIR. The span at 242–251 shows a compositional bias: low complexity; it reads TSTSFKAAKT. Over residues 311-324 the composition is skewed to polar residues; the sequence is YNNADNSQGANASS. Residue S501 is part of the active site. The region spanning 519 to 700 is the DDHD domain; sequence LEFQVDNLFF…AAFILKEILS (182 aa).

Belongs to the PA-PLA1 family.

It localises to the mitochondrion. Functionally, probable phospholipase that hydrolyzes phosphatidic acid. The polypeptide is Probable phospholipase YOR022C, mitochondrial (Saccharomyces cerevisiae (strain ATCC 204508 / S288c) (Baker's yeast)).